Consider the following 95-residue polypeptide: Small ubiquitin-related modifier 4 (95 aa).

A Ubiquitin-like domain is found at His-17–Tyr-95. A Glycyl lysine isopeptide (Gly-Lys) (interchain with K-? in acceptor proteins) cross-link involves residue Gly-93. Positions Val-94 to Tyr-95 are excised as a propeptide.

It belongs to the ubiquitin family. SUMO subfamily. Interacts with SAE2. Covalently attached to a number of proteins. Post-translationally, in contrast to SUMO1, SUMO2 and SUMO3, seems to be insensitive to sentrin-specific proteases due to the presence of Pro-90. This may impair processing to mature form and conjugation to substrates. Expressed mainly in adult and embryonic kidney. Expressed at various levels in immune tissues, with the highest expression in the lymph node and spleen.

In terms of biological role, ubiquitin-like protein which can be covalently attached to target lysines as a monomer. Does not seem to be involved in protein degradation and may modulate protein subcellular localization, stability or activity. Upon oxidative stress, conjugates to various anti-oxidant enzymes, chaperones, and stress defense proteins. May also conjugate to NFKBIA, TFAP2A and FOS, negatively regulating their transcriptional activity, and to NR3C1, positively regulating its transcriptional activity. Covalent attachment to its substrates requires prior activation by the E1 complex SAE1-SAE2 and linkage to the E2 enzyme UBE2I. In Homo sapiens (Human), this protein is Small ubiquitin-related modifier 4 (SUMO4).